Consider the following 276-residue polypeptide: MSVKKKDLITLQDPEAKYPLPLIEKEQISHNTRRFRFGLPSPDHVLGLPVGNYVHLLAQINNELVIRAYTPVSSDDDQGFVDLIIKIYFKNVHPKYPEGGKMTQYLENMKIGDTILFRGPTGRLFYNEPGTLLIKANKTSEPEKKLVHHLGMIAGGTGITPMLQLIRHITKDTSDETRMSLLFANQTEEDILLRKELEEVATTHHKQFNLWYTLDRPPSDWKYSSGFVSADMIKEHLPPPGEDTLILVCGPPPLIQAAAHPSLEQLSYTKDMIFIY.

The region spanning 15 to 127 (EAKYPLPLIE…RGPTGRLFYN (113 aa)) is the FAD-binding FR-type domain. An N6-acetyllysine modification is found at K17. Residue Y18 is modified to Phosphotyrosine. FAD contacts are provided by residues 107-137 (ENMK…IKAN) and 146-181 (LVHH…RMSL).

Belongs to the flavoprotein pyridine nucleotide cytochrome reductase family. FAD is required as a cofactor.

It carries out the reaction 2 Fe(III)-[cytochrome b5] + NADH = 2 Fe(II)-[cytochrome b5] + NAD(+) + H(+). Its function is as follows. NADH-cytochrome b5 reductases are involved in desaturation and elongation of fatty acids, cholesterol biosynthesis, drug metabolism, and, in erythrocyte, methemoglobin reduction. Responsible for NADH-dependent lucigenin chemiluminescence in spermatozoa by reducing both lucigenin and 2-[4-iodophenyl]-3-[4-nitrophenyl]-5-[2,4-disulfophenyl]-2H tetrazolium monosodium salt (WST-1). The protein is NADH-cytochrome b5 reductase 2 (Cyb5r2) of Mus musculus (Mouse).